The chain runs to 131 residues: Profilin-7 (131 aa).

Residues Cys-13 and Cys-115 are joined by a disulfide bond. The short motif at 81–97 (AVIRGKKGAGGITIKKT) is the Involved in PIP2 interaction element. Thr-111 bears the Phosphothreonine mark.

This sequence belongs to the profilin family. In terms of assembly, occurs in many kinds of cells as a complex with monomeric actin in a 1:1 ratio. In terms of processing, phosphorylated by MAP kinases.

It is found in the cytoplasm. Its subcellular location is the cytoskeleton. Binds to actin and affects the structure of the cytoskeleton. At high concentrations, profilin prevents the polymerization of actin, whereas it enhances it at low concentrations. The sequence is that of Profilin-7 from Olea europaea (Common olive).